Here is a 790-residue protein sequence, read N- to C-terminus: LPS-assembly protein LptD (790 aa).

The N-terminal stretch at 1-20 is a signal peptide; sequence MRMLRWLILSAFSVAGAVQA.

Belongs to the LptD family. As to quaternary structure, component of the lipopolysaccharide transport and assembly complex. Interacts with LptE and LptA.

It localises to the cell outer membrane. Functionally, together with LptE, is involved in the assembly of lipopolysaccharide (LPS) at the surface of the outer membrane. In Bordetella bronchiseptica (strain ATCC BAA-588 / NCTC 13252 / RB50) (Alcaligenes bronchisepticus), this protein is LPS-assembly protein LptD.